The sequence spans 211 residues: Uridine kinase (211 aa).

Position 12-19 (12-19 (GGSGSGKT)) interacts with ATP.

It belongs to the uridine kinase family.

The protein localises to the cytoplasm. It catalyses the reaction uridine + ATP = UMP + ADP + H(+). It carries out the reaction cytidine + ATP = CMP + ADP + H(+). Its pathway is pyrimidine metabolism; CTP biosynthesis via salvage pathway; CTP from cytidine: step 1/3. The protein operates within pyrimidine metabolism; UMP biosynthesis via salvage pathway; UMP from uridine: step 1/1. The polypeptide is Uridine kinase (Bacillus velezensis (strain DSM 23117 / BGSC 10A6 / LMG 26770 / FZB42) (Bacillus amyloliquefaciens subsp. plantarum)).